A 496-amino-acid polypeptide reads, in one-letter code: Maturase K (496 aa).

This sequence belongs to the intron maturase 2 family. MatK subfamily.

It localises to the plastid. The protein localises to the chloroplast. In terms of biological role, usually encoded in the trnK tRNA gene intron. Probably assists in splicing its own and other chloroplast group II introns. This chain is Maturase K, found in Paeonia lactiflora (Chinese peony).